Reading from the N-terminus, the 173-residue chain is Ribulose bisphosphate carboxylase small subunit, chloroplastic 2 (173 aa).

A chloroplast-targeting transit peptide spans 1–33 (VVLSKECAKPLATPKVTLNKRGFATTIATKNRE).

The protein belongs to the RuBisCO small chain family. In terms of assembly, heterohexadecamer of 8 large and 8 small subunits.

Its subcellular location is the plastid. The protein resides in the chloroplast. RuBisCO catalyzes two reactions: the carboxylation of D-ribulose 1,5-bisphosphate, the primary event in carbon dioxide fixation, as well as the oxidative fragmentation of the pentose substrate. Both reactions occur simultaneously and in competition at the same active site. Although the small subunit is not catalytic it is essential for maximal activity. This chain is Ribulose bisphosphate carboxylase small subunit, chloroplastic 2, found in Acetabularia acetabulum (Mermaid's wine glass).